Here is a 2299-residue protein sequence, read N- to C-terminus: Protein Ycf2 (2299 aa).

Residue Gly1642–Ser1649 participates in ATP binding.

Belongs to the Ycf2 family.

It localises to the plastid. Its subcellular location is the chloroplast stroma. Probable ATPase of unknown function. Its presence in a non-photosynthetic plant (Epifagus virginiana) and experiments in tobacco indicate that it has an essential function which is probably not related to photosynthesis. The polypeptide is Protein Ycf2 (Nandina domestica (Heavenly bamboo)).